We begin with the raw amino-acid sequence, 150 residues long: MADGLTKSAARNIFYGGSLFFFLLFAALTAHSHWYMVNKSTDNEGLTESVVAGKHIWEKNMCINCHSIMGEGAYFAPELSNVWERYGGHQNPEAARAGLAAWIRAQPLGTQGRRQMPAYDFTDEEMSSLIDFLEWTDGIDDQDWPPHPAG.

The helical; Signal-anchor transmembrane segment at 13 to 29 (IFYGGSLFFFLLFAALT) threads the bilayer. Cys62, Cys65, and His66 together coordinate heme c.

Heterodimer of cytochromes b (large subunit) and c (small subunit).

Its subcellular location is the cell membrane. Its function is as follows. Component of the anaerobic respiratory chain that transforms nitrate to dinitrogen (denitrification). The protein is Nitric oxide reductase subunit C (norC) of Halomonas halodenitrificans (Paracoccus halodenitrificans).